We begin with the raw amino-acid sequence, 387 residues long: Formate-dependent phosphoribosylglycinamide formyltransferase (387 aa).

N(1)-(5-phospho-beta-D-ribosyl)glycinamide contacts are provided by residues glutamate 12 to leucine 13 and glutamate 72. Residues arginine 104, lysine 145, serine 150 to glutamine 155, glutamate 185 to isoleucine 188, and glutamate 193 each bind ATP. One can recognise an ATP-grasp domain in the interval aspartate 109–leucine 300. Residues glutamate 258 and glutamate 270 each contribute to the Mg(2+) site. N(1)-(5-phospho-beta-D-ribosyl)glycinamide is bound by residues aspartate 277, lysine 348, and arginine 355–arginine 356.

Belongs to the PurK/PurT family. Homodimer.

It carries out the reaction N(1)-(5-phospho-beta-D-ribosyl)glycinamide + formate + ATP = N(2)-formyl-N(1)-(5-phospho-beta-D-ribosyl)glycinamide + ADP + phosphate + H(+). It functions in the pathway purine metabolism; IMP biosynthesis via de novo pathway; N(2)-formyl-N(1)-(5-phospho-D-ribosyl)glycinamide from N(1)-(5-phospho-D-ribosyl)glycinamide (formate route): step 1/1. Functionally, involved in the de novo purine biosynthesis. Catalyzes the transfer of formate to 5-phospho-ribosyl-glycinamide (GAR), producing 5-phospho-ribosyl-N-formylglycinamide (FGAR). Formate is provided by PurU via hydrolysis of 10-formyl-tetrahydrofolate. The protein is Formate-dependent phosphoribosylglycinamide formyltransferase of Leptospira borgpetersenii serovar Hardjo-bovis (strain JB197).